Consider the following 127-residue polypeptide: Glycine cleavage system H protein (127 aa).

A Lipoyl-binding domain is found at 24-105; it reads TALVGITDFA…YEDGWMVKVS (82 aa). Lysine 65 carries the post-translational modification N6-lipoyllysine.

The protein belongs to the GcvH family. As to quaternary structure, the glycine cleavage system is composed of four proteins: P, T, L and H. It depends on (R)-lipoate as a cofactor.

In terms of biological role, the glycine cleavage system catalyzes the degradation of glycine. The H protein shuttles the methylamine group of glycine from the P protein to the T protein. This Prosthecochloris aestuarii (strain DSM 271 / SK 413) protein is Glycine cleavage system H protein.